A 216-amino-acid polypeptide reads, in one-letter code: DNA replication complex GINS protein psf1 (216 aa).

The interval 110-133 (QTTGGPKGVTEGNEGGGTTSSLSP) is disordered. The span at 111–127 (TTGGPKGVTEGNEGGGT) shows a compositional bias: gly residues.

It belongs to the GINS1/PSF1 family. In terms of assembly, component of the GINS complex which is a heterotetramer of div-26/sld5, drc-1/psf1, drc-2/psf2 and drc-3/psf3.

It is found in the nucleus. In terms of biological role, the GINS complex plays an essential role in the initiation of DNA replication. This Neurospora crassa (strain ATCC 24698 / 74-OR23-1A / CBS 708.71 / DSM 1257 / FGSC 987) protein is DNA replication complex GINS protein psf1 (drc-1).